The following is a 229-amino-acid chain: Potassium/proton antiporter CemA (229 aa).

The next 3 helical transmembrane spans lie at 7 to 27 (FTPLLYLASIIFLPWWISLSF), 107 to 127 (ILHFSTNIICFIILSGYSLLG), and 189 to 209 (IISGLVSTFPVILDTIFKYWI).

This sequence belongs to the CemA family.

Its subcellular location is the plastid. The protein resides in the chloroplast inner membrane. The catalysed reaction is K(+)(in) + H(+)(out) = K(+)(out) + H(+)(in). Its function is as follows. Contributes to K(+)/H(+) antiport activity by supporting proton efflux to control proton extrusion and homeostasis in chloroplasts in a light-dependent manner to modulate photosynthesis. Prevents excessive induction of non-photochemical quenching (NPQ) under continuous-light conditions. Indirectly promotes efficient inorganic carbon uptake into chloroplasts. The chain is Potassium/proton antiporter CemA from Lactuca sativa (Garden lettuce).